The chain runs to 361 residues: Peroxidase A (361 aa).

The protein belongs to the peroxidase family. In terms of processing, partially N-glycosylated.

Its subcellular location is the secreted. It catalyses the reaction 2 a phenolic donor + H2O2 = 2 a phenolic radical donor + 2 H2O. This chain is Peroxidase A, found in Aloe vera (Aloe).